Consider the following 201-residue polypeptide: Holliday junction branch migration complex subunit RuvA (201 aa).

The domain I stretch occupies residues 1–63; that stretch reads MIEFVRGYVD…EDTLALYGFR (63 aa). Residues 64–142 are domain II; that stretch reads TREERTLFAK…AVTAKTFPDL (79 aa). Positions 143–153 are flexible linker; that stretch reads FHLQEESARPH. Positions 153–201 are domain III; it reads HLSALEEAIEALKALGYAEREIQKVVPSLMKENLSTDQYVKRALQQLLK.

This sequence belongs to the RuvA family. Homotetramer. Forms an RuvA(8)-RuvB(12)-Holliday junction (HJ) complex. HJ DNA is sandwiched between 2 RuvA tetramers; dsDNA enters through RuvA and exits via RuvB. An RuvB hexamer assembles on each DNA strand where it exits the tetramer. Each RuvB hexamer is contacted by two RuvA subunits (via domain III) on 2 adjacent RuvB subunits; this complex drives branch migration. In the full resolvosome a probable DNA-RuvA(4)-RuvB(12)-RuvC(2) complex forms which resolves the HJ.

Its subcellular location is the cytoplasm. Functionally, the RuvA-RuvB-RuvC complex processes Holliday junction (HJ) DNA during genetic recombination and DNA repair, while the RuvA-RuvB complex plays an important role in the rescue of blocked DNA replication forks via replication fork reversal (RFR). RuvA specifically binds to HJ cruciform DNA, conferring on it an open structure. The RuvB hexamer acts as an ATP-dependent pump, pulling dsDNA into and through the RuvAB complex. HJ branch migration allows RuvC to scan DNA until it finds its consensus sequence, where it cleaves and resolves the cruciform DNA. The polypeptide is Holliday junction branch migration complex subunit RuvA (Geobacillus sp. (strain WCH70)).